Here is a 417-residue protein sequence, read N- to C-terminus: D-amino acid dehydrogenase (417 aa).

Residue 3-17 (VVILGSGVVGVSTAW) participates in FAD binding.

This sequence belongs to the DadA oxidoreductase family. FAD serves as cofactor.

It carries out the reaction a D-alpha-amino acid + A + H2O = a 2-oxocarboxylate + AH2 + NH4(+). It functions in the pathway amino-acid degradation; D-alanine degradation; NH(3) and pyruvate from D-alanine: step 1/1. In terms of biological role, oxidative deamination of D-amino acids. The sequence is that of D-amino acid dehydrogenase from Pectobacterium carotovorum subsp. carotovorum (strain PC1).